Consider the following 165-residue polypeptide: 3-isopropylmalate dehydratase small subunit (165 aa).

The protein belongs to the LeuD family. LeuD type 2 subfamily. As to quaternary structure, heterodimer of LeuC and LeuD.

It carries out the reaction (2R,3S)-3-isopropylmalate = (2S)-2-isopropylmalate. Its pathway is amino-acid biosynthesis; L-leucine biosynthesis; L-leucine from 3-methyl-2-oxobutanoate: step 2/4. Its function is as follows. Catalyzes the isomerization between 2-isopropylmalate and 3-isopropylmalate, via the formation of 2-isopropylmaleate. The polypeptide is 3-isopropylmalate dehydratase small subunit (Saccharolobus islandicus (strain Y.N.15.51 / Yellowstone #2) (Sulfolobus islandicus)).